The following is a 712-amino-acid chain: Matrix metalloproteinase-9 (712 aa).

The N-terminal stretch at 1–19 (MSPLQPLVLALLVLACCSA) is a signal peptide. Positions 20 to 106 (VPRRRQPTVV…PRCGVPDVGR (87 aa)) are cleaved as a propeptide — activation peptide. N-linked (GlcNAc...) asparagine glycosylation occurs at N38. The Cysteine switch signature appears at 97–104 (PRCGVPDV). Position 99 (C99) interacts with Zn(2+). 2 N-linked (GlcNAc...) asparagine glycosylation sites follow: N120 and N127. D131 and D165 together coordinate Ca(2+). Positions 175 and 177 each coordinate Zn(2+). Residues D182, G183, N185, and L187 each contribute to the Ca(2+) site. Position 190 (H190) interacts with Zn(2+). Positions 197, 199, and 201 each coordinate Ca(2+). Residue H203 participates in Zn(2+) binding. Ca(2+)-binding residues include D205, D206, and E208. 3 consecutive Fibronectin type-II domains span residues 225–273 (AKGA…FCPS), 283–331 (ADGK…FCPT), and 342–390 (AAGE…FCPD). Cystine bridges form between C230–C256, C244–C271, C288–C314, C302–C329, C347–C373, and C361–C388. H401 lines the Zn(2+) pocket. Residue E402 is part of the active site. Zn(2+) is bound by residues H405 and H411. A disordered region spans residues 440–519 (QHLYGPRPEP…PTESPDPAED (80 aa)). Positions 455–465 (TTTTTTTTEPQ) are enriched in low complexity. Residues 491–504 (TGPPAAGPTGPPTA) show a composition bias toward pro residues. A compositionally biased stretch (low complexity) spans 505 to 514 (GPSAAPTESP). A disulfide bond links C521 and C709. Hemopexin repeat units follow at residues 523–568 (VDIF…WPAL), 569–613 (PRKL…GLGP), 615–662 (VAQV…FPGV), and 663–709 (PIST…LLKC).

This sequence belongs to the peptidase M10A family. In terms of assembly, exists as monomer or homodimer; disulfide-linked. Also exists as heterodimer with LCN2. Macrophages and transformed cell lines produce only the monomeric form. Interacts with ECM1. It depends on Zn(2+) as a cofactor. Ca(2+) is required as a cofactor. Post-translationally, N- and O-glycosylated.

Its subcellular location is the secreted. The protein resides in the extracellular space. It localises to the extracellular matrix. The enzyme catalyses Cleavage of gelatin types I and V and collagen types IV and V.. Its function is as follows. Matrix metalloproteinase that plays an essential role in local proteolysis of the extracellular matrix and in leukocyte migration. Could play a role in bone osteoclastic resorption. Cleaves KiSS1 at a Gly-|-Leu bond. Cleaves NINJ1 to generate the Secreted ninjurin-1 form. Cleaves type IV and type V collagen into large C-terminal three quarter fragments and shorter N-terminal one quarter fragments. Degrades fibronectin but not laminin or Pz-peptide. The chain is Matrix metalloproteinase-9 from Bos taurus (Bovine).